A 342-amino-acid polypeptide reads, in one-letter code: Ferredoxin--NADP reductase (342 aa).

The FAD site is built by C17, D36, Q44, Y49, V89, F124, D289, and T330.

Belongs to the ferredoxin--NADP reductase type 2 family. As to quaternary structure, homodimer. Requires FAD as cofactor.

The catalysed reaction is 2 reduced [2Fe-2S]-[ferredoxin] + NADP(+) + H(+) = 2 oxidized [2Fe-2S]-[ferredoxin] + NADPH. This is Ferredoxin--NADP reductase from Bradyrhizobium diazoefficiens (strain JCM 10833 / BCRC 13528 / IAM 13628 / NBRC 14792 / USDA 110).